The sequence spans 235 residues: Small ribosomal subunit protein eS6 (235 aa).

The segment at 190–212 is disordered; the sequence is GFHPRERGERRRKSVRGRMIPDP.

This sequence belongs to the eukaryotic ribosomal protein eS6 family.

This chain is Small ribosomal subunit protein eS6, found in Aeropyrum pernix (strain ATCC 700893 / DSM 11879 / JCM 9820 / NBRC 100138 / K1).